Consider the following 367-residue polypeptide: ELAV-like protein 3 (367 aa).

3 RRM domains span residues 39–117 (TNLI…YARP), 125–205 (ANLY…FANN), and 284–362 (WCIF…FKTS).

It belongs to the RRM elav family. In terms of assembly, interacts with MAP1B light chain LC1. In terms of tissue distribution, brain specific.

RNA-binding protein that binds to AU-rich element (ARE) sequences of target mRNAs, including VEGF mRNA. May also bind poly-A tracts via RRM 3. May be involved in neuronal differentiation and maintenance. Plays a role in the stabilization of GAP43 mRNA and in spatial learning. This Homo sapiens (Human) protein is ELAV-like protein 3 (ELAVL3).